An 841-amino-acid polypeptide reads, in one-letter code: ATP-dependent helicase Lhr-Core (841 aa).

8 residues coordinate ATP: Gln-39, Lys-62, Thr-63, Asp-181, Glu-182, Ile-352, Arg-369, and His-372. In terms of domain architecture, Helicase ATP-binding spans 43–234 (IKEIHEGKNV…FLVGNGRDCY (192 aa)). Residues 181-184 (DEIH) carry the DEVH box motif. A Helicase C-terminal domain is found at 266-416 (RLYNLLKKLI…RIHIPKNCLD (151 aa)). A WH domain region spans residues 417 to 500 (VLAQHLVGMA…IYYMNVGTIP (84 aa)). A domain 4 region spans residues 501–841 (DETAVDVIAD…MEFISMKGKK (341 aa)).

This sequence belongs to the Lhr helicase family. Lhr-Core subfamily. In terms of assembly, monomer.

It catalyses the reaction Couples ATP hydrolysis with the unwinding of duplex DNA by translocating in the 3'-5' direction.. It carries out the reaction ATP + H2O = ADP + phosphate + H(+). DNA helicase that loads on single-stranded (ss)DNA and translocates in a 3'-5' direction, probably involved in DNA repair. Archaeal orthologs have double-stranded (ds)DNA and/or RNA:DNA helicase activity. The chain is ATP-dependent helicase Lhr-Core from Methanocaldococcus jannaschii (strain ATCC 43067 / DSM 2661 / JAL-1 / JCM 10045 / NBRC 100440) (Methanococcus jannaschii).